Reading from the N-terminus, the 91-residue chain is Small ribosomal subunit protein uS19 (91 aa).

This sequence belongs to the universal ribosomal protein uS19 family.

In terms of biological role, protein S19 forms a complex with S13 that binds strongly to the 16S ribosomal RNA. The chain is Small ribosomal subunit protein uS19 from Hahella chejuensis (strain KCTC 2396).